Consider the following 387-residue polypeptide: Acyl-[acyl-carrier-protein] 6-desaturase (387 aa).

The N-terminal 29 residues, 1-29, are a transit peptide targeting the chloroplast; sequence MALVFKSIGAHKTPPCTLNLASPALYHTR. Fe cation is bound by residues Glu-131, Glu-169, His-172, Glu-222, Glu-255, and His-258.

The protein belongs to the fatty acid desaturase type 2 family. Requires Fe(2+) as cofactor.

The protein resides in the plastid. The protein localises to the chloroplast. The enzyme catalyses hexadecanoyl-[ACP] + 2 reduced [2Fe-2S]-[ferredoxin] + O2 + 2 H(+) = (6Z)-hexadecenoyl-[ACP] + 2 oxidized [2Fe-2S]-[ferredoxin] + 2 H2O. It participates in lipid metabolism; fatty acid metabolism. With respect to regulation, inhibited by KCN or H(2)O(2). Functionally, delta(6) fatty acid desaturase introducing a cis double bond at carbon 6 of palmitoyl-[acyl-carrier protein](16:0-ACP), producing 16:1(6Z)-ACP. No activity with the coenzyme A ester of the fatty acid. The position of the double bond is determined by its distance from the carboxyl end of the fatty acid. Low activity with several saturated acyl-[acyl-carrier protein]s, including 14:0-ACP and 18:0-ACP. Requires reduced ferredoxin for detectable in vitro activity. The polypeptide is Acyl-[acyl-carrier-protein] 6-desaturase (Thunbergia alata (Black-eyed Susan vine)).